The primary structure comprises 1415 residues: Uveal autoantigen with coiled-coil domains and ankyrin repeats (1415 aa).

ANK repeat units follow at residues 69–98 (EGRS…DITT), 102–131 (AGRN…PTEH), 135–164 (QGRT…SVNA), 168–197 (DGRT…EINS), and 201–230 (QNRT…DVSL). The stretch at 288–376 (VKSSQREHRN…TIESLKNRFK (89 aa)) forms a coiled coil. The ANK 6 repeat unit spans residues 617–646 (ELLAKLTLSVPTEKFESMKSLLSSEVNEKV). Residues 759 to 1381 (TVEELKKQLL…TDRQHQEVIA (623 aa)) adopt a coiled-coil conformation. Lysine 1034 is covalently cross-linked (Glycyl lysine isopeptide (Lys-Gly) (interchain with G-Cter in SUMO2)). A compositionally biased stretch (basic and acidic residues) spans 1186-1201 (LREKEEESQNKTEEVS). The interval 1186 to 1205 (LREKEEESQNKTEEVSKLQS) is disordered.

As to quaternary structure, component of the apoptosome complex, composed of APAF1, pro-caspase-9 and UACA. In the complex, it probably interacts directly with APAF1. Interacts with LGALS3, ARF6 and ACTB. Interacts with RAB39A. In terms of tissue distribution, highly expressed in adrenal, testis, kidney and large intestine.

It localises to the nucleus. Its subcellular location is the cytoplasm. The protein localises to the cytoskeleton. In terms of biological role, regulates APAF1 expression and plays an important role in the regulation of stress-induced apoptosis. Promotes apoptosis by regulating three pathways, apoptosome up-regulation, LGALS3/galectin-3 down-regulation and NF-kappa-B inactivation. Regulates the redistribution of APAF1 into the nucleus after proapoptotic stress. Down-regulates the expression of LGALS3 by inhibiting NFKB1. Functionally, modulates isoactin dynamics to regulate the morphological alterations required for cell growth and motility. Interaction with ARF6 may modulate cell shape and motility after injury. May be involved in multiple neurite formation. The polypeptide is Uveal autoantigen with coiled-coil domains and ankyrin repeats (UACA) (Canis lupus familiaris (Dog)).